Reading from the N-terminus, the 322-residue chain is Phosphate acetyltransferase (322 aa).

Belongs to the phosphate acetyltransferase and butyryltransferase family.

The protein localises to the cytoplasm. It carries out the reaction acetyl-CoA + phosphate = acetyl phosphate + CoA. It functions in the pathway metabolic intermediate biosynthesis; acetyl-CoA biosynthesis; acetyl-CoA from acetate: step 2/2. This Mycoplasma capricolum subsp. capricolum (strain California kid / ATCC 27343 / NCTC 10154) protein is Phosphate acetyltransferase (pta).